Reading from the N-terminus, the 264-residue chain is Protein GrpE (264 aa).

Positions 36 to 49 are enriched in basic and acidic residues; the sequence is KVQSKKVSSDHSSS. The segment at 36 to 59 is disordered; sequence KVQSKKVSSDHSSSEDNASSDINS. The segment covering 50 to 59 has biased composition (low complexity); the sequence is EDNASSDINS.

It belongs to the GrpE family. Homodimer.

It localises to the cytoplasm. Functionally, participates actively in the response to hyperosmotic and heat shock by preventing the aggregation of stress-denatured proteins, in association with DnaK and GrpE. It is the nucleotide exchange factor for DnaK and may function as a thermosensor. Unfolded proteins bind initially to DnaJ; upon interaction with the DnaJ-bound protein, DnaK hydrolyzes its bound ATP, resulting in the formation of a stable complex. GrpE releases ADP from DnaK; ATP binding to DnaK triggers the release of the substrate protein, thus completing the reaction cycle. Several rounds of ATP-dependent interactions between DnaJ, DnaK and GrpE are required for fully efficient folding. The sequence is that of Protein GrpE from Peanut witches'-broom phytoplasma.